Here is a 2434-residue protein sequence, read N- to C-terminus: Protein Ycf2 (2434 aa).

Position 1693 to 1700 (1693 to 1700) interacts with ATP; the sequence is GPTETGRS.

The protein belongs to the Ycf2 family.

The protein localises to the plastid. Its subcellular location is the chloroplast stroma. Functionally, probable ATPase of unknown function. Its presence in a non-photosynthetic plant (Epifagus virginiana) and experiments in tobacco indicate that it has an essential function which is probably not related to photosynthesis. The chain is Protein Ycf2 from Cycas taitungensis (Prince sago).